We begin with the raw amino-acid sequence, 83 residues long: Small ribosomal subunit protein eS21 (83 aa).

Belongs to the eukaryotic ribosomal protein eS21 family. Component of the 40S small ribosomal subunit.

Its subcellular location is the cytoplasm. It is found in the cytosol. The protein resides in the rough endoplasmic reticulum. The polypeptide is Small ribosomal subunit protein eS21 (RpS21) (Biphyllus lunatus (Beetle)).